A 162-amino-acid polypeptide reads, in one-letter code: MKKPFRIGFGFDVHRLSEGYPLWMGGVRLEHSKGLEGHSDADVLIHAICDALLGAAALRDIGYHFPPSDPQYKGIDSKILLARVMELVRSQGYELGNIDATIAAEQPKLNPHIPDMQRVLAEVIQVEVSDISLKATTTEKLGFTGREEGISAYAVALLIAAV.

A divalent metal cation is bound by residues aspartate 12 and histidine 14. Residues 12–14 (DVH) and 38–39 (HS) each bind 4-CDP-2-C-methyl-D-erythritol 2-phosphate. Histidine 46 is a binding site for a divalent metal cation. 4-CDP-2-C-methyl-D-erythritol 2-phosphate is bound by residues 60-62 (DIG), 136-139 (TTTE), phenylalanine 143, and arginine 146.

This sequence belongs to the IspF family. As to quaternary structure, homotrimer. The cofactor is a divalent metal cation.

It carries out the reaction 4-CDP-2-C-methyl-D-erythritol 2-phosphate = 2-C-methyl-D-erythritol 2,4-cyclic diphosphate + CMP. The protein operates within isoprenoid biosynthesis; isopentenyl diphosphate biosynthesis via DXP pathway; isopentenyl diphosphate from 1-deoxy-D-xylulose 5-phosphate: step 4/6. Involved in the biosynthesis of isopentenyl diphosphate (IPP) and dimethylallyl diphosphate (DMAPP), two major building blocks of isoprenoid compounds. Catalyzes the conversion of 4-diphosphocytidyl-2-C-methyl-D-erythritol 2-phosphate (CDP-ME2P) to 2-C-methyl-D-erythritol 2,4-cyclodiphosphate (ME-CPP) with a corresponding release of cytidine 5-monophosphate (CMP). This is 2-C-methyl-D-erythritol 2,4-cyclodiphosphate synthase from Porphyromonas gingivalis (strain ATCC BAA-308 / W83).